A 221-amino-acid polypeptide reads, in one-letter code: Sigma non-opioid intracellular receptor 1 (221 aa).

The Lumenal segment spans residues 1–4 (MALW). The chain crosses the membrane as a helical span at residues 5 to 27 (RGLRAVLAVAGLAVAVQLLRGWL). Residues 28-221 (GSKSYVFNRE…STHLSELGFF (194 aa)) are Cytoplasmic-facing. The tract at residues 96–103 (SLTEYVLL) is important for ligand-binding. A C-terminal hydrophobic region region spans residues 174-221 (FIPSTLGFALADTIFSTQDFLTLFYTVKVYGKALLLETSTHLSELGFF).

The protein belongs to the ERG2 family. In terms of assembly, homotrimer.

Its subcellular location is the nucleus inner membrane. It localises to the nucleus outer membrane. The protein localises to the nucleus envelope. It is found in the cytoplasmic vesicle. The protein resides in the endoplasmic reticulum membrane. Its subcellular location is the membrane. May function in lipid transport from the endoplasmic reticulum and be involved in a wide array of cellular functions probably through regulation of the biogenesis of lipid microdomains at the plasma membrane. May regulate calcium efflux at the endoplasmic reticulum. The protein is Sigma non-opioid intracellular receptor 1 (sigmar1) of Xenopus tropicalis (Western clawed frog).